The primary structure comprises 369 residues: Gap junction alpha-5 protein (369 aa).

Topologically, residues 2 to 19 (GDWSFLGEFLEEVHKHST) are cytoplasmic. A helical transmembrane segment spans residues 20–40 (VVGKVWLTVLFIFRMLVLGTA). Residues 41–76 (AGPLWGDEQSDFMCDTQQPGCENVCYDKAFPISHVR) are Extracellular-facing. A helical transmembrane segment spans residues 77–97 (FWVLQIIFVSTPSLVYMGHAM). The Cytoplasmic segment spans residues 98-169 (HTVRMEEKRK…YSILIRTAME (72 aa)). Residues 170–190 (IAFIVGQYILYGIFLETLYIC) form a helical membrane-spanning segment. Residues 191–210 (QRAPCPHPVNCYVSRPTEKN) are Extracellular-facing. A helical membrane pass occupies residues 211–231 (VFIIFMLAVAVLSLFLSLAEL). At 232–369 (YHLGWKKAKE…SKARSDDLSV (138 aa)) the chain is on the cytoplasmic side. The interval 347-369 (NEKRRFSKASRASSKARSDDLSV) is disordered.

This sequence belongs to the connexin family. Alpha-type (group II) subfamily. A connexon is composed of a hexamer of connexins. Mostly in heart, and in the whole embryo, liver, stomach, and pectoral muscle.

Its subcellular location is the cell membrane. It is found in the cell junction. The protein localises to the gap junction. Its function is as follows. One gap junction consists of a cluster of closely packed pairs of transmembrane channels, the connexons, through which materials of low MW diffuse from one cell to a neighboring cell. The chain is Gap junction alpha-5 protein (GJA5) from Gallus gallus (Chicken).